A 431-amino-acid polypeptide reads, in one-letter code: Protoheme IX farnesyltransferase, mitochondrial (431 aa).

The transit peptide at 1 to 33 (MWRRSVVYRFSSRISVSSSLPNPRLIPWSRELC) directs the protein to the mitochondrion. A run of 9 helical transmembrane segments spans residues 109-129 (LVVATSGTGYILGTGNAAISF), 131-153 (GLCYTCAGTMMIAASANSLNQIF), 174-194 (ISVPHAVAWATIAGASGACLL), 200-220 (MLAAGLASANLVLYAFVYTPL), 226-246 (INTWVGAVVGAIPPLLGWAAA), 255-275 (MILPAALYFWQIPHFMALAHL), 298-317 (IAAVALRNCFYMIPLGFIAY), 322-344 (TSSWFCLESTLLTLAIAATAFSF), and 356-376 (MFHASLLFLPVFMSGLLLHRV).

It belongs to the ubiA prenyltransferase (TC 3.D.4.8) family.

It is found in the mitochondrion inner membrane. The catalysed reaction is heme b + (2E,6E)-farnesyl diphosphate + H2O = Fe(II)-heme o + diphosphate. Converts protoheme IX and farnesyl diphosphate to heme O. The sequence is that of Protoheme IX farnesyltransferase, mitochondrial (COX10) from Arabidopsis thaliana (Mouse-ear cress).